The sequence spans 209 residues: Large ribosomal subunit protein uL3c (209 aa).

The tract at residues Pro132 to Arg154 is disordered.

This sequence belongs to the universal ribosomal protein uL3 family. In terms of assembly, part of the 50S ribosomal subunit.

The protein localises to the plastid. It is found in the cyanelle. In terms of biological role, one of the primary rRNA binding proteins, it binds directly near the 3'-end of the 23S rRNA, where it nucleates assembly of the 50S subunit. In Cyanophora paradoxa, this protein is Large ribosomal subunit protein uL3c (rpl3).